The chain runs to 151 residues: MRREKKSRAYRGSRTHGWGRVGQHRKSGSRGGRGLVGYHKHKWSWTVKYAPDWYGKHGFTRHPSLVVEYRTINVGQLDAEVEEFFRKGLASREGDAYVVDLTQLGFNKLTGSGQVRNKIIVKVPVATKRAISKIEAQGGRVEVAKTQEAGE.

Basic residues predominate over residues 1-14; the sequence is MRREKKSRAYRGSR. Residues 1–33 form a disordered region; it reads MRREKKSRAYRGSRTHGWGRVGQHRKSGSRGGR.

The protein belongs to the universal ribosomal protein uL15 family. Part of the 50S ribosomal subunit.

In terms of biological role, binds to the 23S rRNA. The sequence is that of Large ribosomal subunit protein uL15 from Thermofilum pendens (strain DSM 2475 / Hrk 5).